The sequence spans 206 residues: Ras-related protein RABG3f (206 aa).

Position 15-23 (15-23 (GDSGVGKTS)) interacts with GTP. An Effector region motif is present at residues 37-45 (YKATIGADF). GTP-binding positions include 63 to 67 (DTAGQ), 125 to 128 (NKVD), and 158 to 159 (SA). 2 S-geranylgeranyl cysteine lipidation sites follow: Cys-204 and Cys-206. Position 206 is a cysteine methyl ester (Cys-206).

It belongs to the small GTPase superfamily. Rab family. As to quaternary structure, interacts with VPS35A.

It localises to the endosome membrane. Its subcellular location is the vacuole membrane. The protein localises to the prevacuolar compartment membrane. Its activity is regulated as follows. Regulated by guanine nucleotide exchange factors (GEFs) which promote the exchange of bound GDP for free GTP. Regulated by the MON1-CCZ1 complex which serves as a link between Rab5 and Rab7 protein families in PVCs and mediates PVC maturation. In terms of biological role, essential for trafficking from prevacuolar compartments to vacuoles. Involved in the trafficking of newly synthesized protein to vacuoles. Essential for plant growth. Participates in the recruitment of the core retromer components to the endosomal membrane by interacting with VPS35A. This Arabidopsis thaliana (Mouse-ear cress) protein is Ras-related protein RABG3f (RABG3F).